The chain runs to 407 residues: Carbamoyl phosphate synthase small chain (407 aa).

Residues 1–203 form a CPSase region; the sequence is MSQNESGTIA…EPCGEYEGKE (203 aa). L-glutamine-binding residues include Ser61, Gly255, and Gly257. The Glutamine amidotransferase type-1 domain maps to 207 to 405; that stretch reads TVAAVDLGIK…CELMKNNSKE (199 aa). Cys283 functions as the Nucleophile in the catalytic mechanism. 5 residues coordinate L-glutamine: Phe284, Gln287, Asn325, Gly327, and Phe328. Active-site residues include His378 and Glu380.

This sequence belongs to the CarA family. Composed of two chains; the small (or glutamine) chain promotes the hydrolysis of glutamine to ammonia, which is used by the large (or ammonia) chain to synthesize carbamoyl phosphate. Tetramer of heterodimers (alpha,beta)4.

The enzyme catalyses hydrogencarbonate + L-glutamine + 2 ATP + H2O = carbamoyl phosphate + L-glutamate + 2 ADP + phosphate + 2 H(+). It carries out the reaction L-glutamine + H2O = L-glutamate + NH4(+). The protein operates within amino-acid biosynthesis; L-arginine biosynthesis; carbamoyl phosphate from bicarbonate: step 1/1. Its pathway is pyrimidine metabolism; UMP biosynthesis via de novo pathway; (S)-dihydroorotate from bicarbonate: step 1/3. Its function is as follows. Small subunit of the glutamine-dependent carbamoyl phosphate synthetase (CPSase). CPSase catalyzes the formation of carbamoyl phosphate from the ammonia moiety of glutamine, carbonate, and phosphate donated by ATP, constituting the first step of 2 biosynthetic pathways, one leading to arginine and/or urea and the other to pyrimidine nucleotides. The small subunit (glutamine amidotransferase) binds and cleaves glutamine to supply the large subunit with the substrate ammonia. The polypeptide is Carbamoyl phosphate synthase small chain (Bifidobacterium longum (strain NCC 2705)).